A 70-amino-acid chain; its full sequence is MFTLKKSLLLLFFLGTINLSLCEQERDADEEERRDDDEMDVEVEKRFLPLAVSLAANFLPKLFCKITKKC.

The signal sequence occupies residues 1-22 (MFTLKKSLLLLFFLGTINLSLC). Positions 23 to 46 (EQERDADEEERRDDDEMDVEVEKR) are excised as a propeptide. Cys-64 and Cys-70 are joined by a disulfide.

Expressed by the skin glands.

It is found in the secreted. Its function is as follows. Antimicrobial peptide with activity against Gram-positive and Gram-negative bacteria and against fungi. Has been tested against S.aureus (MIC=5.5 ug/mL), E.coli (MIC=6.5 ug/mL), B.dysenteriae (MIC=2.2 ug/mL), and C.albicans (MIC=7.5 ug/mL). Can regulate or mediate antimicrobial response by stimulating mast cell degranulation. Induces histamine release. Shows cytotoxicity toward solid tumor cell line HepG2. Also shows a potent hemolytic activity (LD(50)=5 ug/ml). The polypeptide is Brevinin-ALb (Amolops loloensis (Lolokou Sucker Frog)).